A 594-amino-acid polypeptide reads, in one-letter code: DELLA protein 1 (594 aa).

A disordered region spans residues 1–36 (MKREHQESFGGGVISNNNKTNTNHLNSSKNINFGEC). A compositionally biased stretch (low complexity) spans 15-30 (SNNNKTNTNHLNSSKN). The short motif at 61-65 (DELLA) is the DELLA motif element. Residues 207–587 (VDTQETGVRL…RSLIATSAWK (381 aa)) enclose the GRAS domain. Positions 214–268 (VRLVHTLMACAEAIQQKNLKLAEALVKHISLLASLQTGAMRKVASYFAQALARRI) are leucine repeat I (LRI). Residues 216–253 (LVHTLMACAEAIQQKNLKLAEALVKHISLLASLQTGAM) are required for possible homodimerization. The LxCxE motif; degenerate signature appears at 221–225 (MACAE). Positions 285-350 (HMHFYESSPY…GGPPTFRLTG (66 aa)) are VHIID. Positions 316-320 (VHVID) match the VHIID motif. Residues 364 to 396 (QVGWKLAQLAQTIGVQFEFRGFVCNSIADLDPN) are leucine repeat II (LRII). Positions 406–508 (VAVNSVFELH…EIYLGKQICN (103 aa)) are PFYRE. The LXXLL motif; degenerate motif lies at 414 to 418 (LHTML). The segment at 511–587 (AYEGVDRVER…RSLIATSAWK (77 aa)) is SAW.

It belongs to the GRAS family. DELLA subfamily. As to quaternary structure, may be a homodimer. Ubiquitinated. Upon GA application it is ubiquitinated, leading to its subsequent degradation. In terms of tissue distribution, strongly expressed in the vascular tissue and endodermis but barely in the inner cortical cells where arbuscule are formed during arbuscular mycorrhizal (AM) symbiosis.

The protein localises to the nucleus. In terms of biological role, probable transcriptional regulator that acts as a repressor of the gibberellin (GA) signaling pathway. Probably acts by participating in large multiprotein complexes that repress transcription of GA-inducible genes. Upon GA application, it is degraded by the proteasome, allowing the GA signaling pathway. Together with DELLA2, required to enable arbuscule development during arbuscular mycorrhizal (AM) symbiosis with AM fungi (e.g. Glomus versiforme) via the regulation of RAM1 which, in turn, regulates various AM genes (e.g. NSP1, NSP2, PT4, LEC5, RAM2, EXO70I, STR and RAD1). The protein is DELLA protein 1 of Medicago truncatula (Barrel medic).